Reading from the N-terminus, the 853-residue chain is Protein translocase subunit SecA 1 (853 aa).

Residues glutamine 85, 103 to 107 (GEGKT), and aspartate 492 each bind ATP.

The protein belongs to the SecA family. Monomer and homodimer. Part of the essential Sec protein translocation apparatus which comprises SecA, SecYEG and auxiliary proteins SecDF. Other proteins may also be involved.

It localises to the cell membrane. The protein localises to the cytoplasm. It catalyses the reaction ATP + H2O + cellular proteinSide 1 = ADP + phosphate + cellular proteinSide 2.. Functionally, part of the Sec protein translocase complex. Interacts with the SecYEG preprotein conducting channel. Has a central role in coupling the hydrolysis of ATP to the transfer of proteins into and across the cell membrane, serving as an ATP-driven molecular motor driving the stepwise translocation of polypeptide chains across the membrane. The polypeptide is Protein translocase subunit SecA 1 (Corynebacterium diphtheriae (strain ATCC 700971 / NCTC 13129 / Biotype gravis)).